Consider the following 402-residue polypeptide: Nodal homolog 4-A (402 aa).

A signal peptide spans 1-18 (MHLYFYCLILLFVPGGNS). The propeptide occupies 19 to 278 (LGINSYLKHM…TIAHTRRHRR (260 aa)). N-linked (GlcNAc...) asparagine glycans are attached at residues Asn37, Asn238, and Asn340. Disulfide bonds link Cys302–Cys368, Cys331–Cys399, and Cys335–Cys401.

It belongs to the TGF-beta family. As to quaternary structure, homodimer; disulfide-linked. In terms of tissue distribution, during blastula stages, expressed in the endoderm at a higher level dorsally than ventrally. Expressed in the deep cells of the Spemann organizer at the gastrula stage. Expressed in the notochord (a derivative of the organizer) and neural tube during the neural stages.

The protein resides in the secreted. Functionally, cooperation and regulatory loops of multiple nodals are essential for mesendoderm patterning in early embryos. Plays a role in mesoderm formation and may be required for neural development. This chain is Nodal homolog 4-A (nodal4-a), found in Xenopus laevis (African clawed frog).